The primary structure comprises 316 residues: Solute carrier family 25 member 32 (316 aa).

3 Solcar repeats span residues 20–109 (HVRY…IKSY), 118–209 (LEPL…LKLK), and 222–306 (LSTA…VSHF). 6 consecutive transmembrane segments (helical) span residues 26–46 (LVAG…LDLV), 89–106 (VWGA…YNAI), 123–143 (YLVS…PLWV), 185–203 (GFVP…FMAY), 227–243 (YISV…AATY), and 281–300 (GIAP…FVVY).

The protein belongs to the mitochondrial carrier (TC 2.A.29) family.

Its subcellular location is the mitochondrion inner membrane. The enzyme catalyses FAD(in) = FAD(out). In terms of biological role, facilitates flavin adenine dinucleotide (FAD) translocation across the mitochondrial inner membrane into the mitochondrial matrix where it acts as a redox cofactor to assist flavoenzyme activities in fundamental metabolic processes including fatty acid beta-oxidation, amino acid and choline metabolism as well as mitochondrial electron transportation. In particular, provides FAD to DLD dehydrogenase of the glycine cleavage system, part of mitochondrial one-carbon metabolic pathway involved in neural tube closure in early embryogenesis. This chain is Solute carrier family 25 member 32, found in Mus musculus (Mouse).